Consider the following 514-residue polypeptide: Cobyric acid synthase (514 aa).

Residues L249 to I448 enclose the GATase cobBQ-type domain. C330 functions as the Nucleophile in the catalytic mechanism. H440 is an active-site residue.

This sequence belongs to the CobB/CobQ family. CobQ subfamily.

It functions in the pathway cofactor biosynthesis; adenosylcobalamin biosynthesis. Catalyzes amidations at positions B, D, E, and G on adenosylcobyrinic A,C-diamide. NH(2) groups are provided by glutamine, and one molecule of ATP is hydrogenolyzed for each amidation. The chain is Cobyric acid synthase from Ruminiclostridium cellulolyticum (strain ATCC 35319 / DSM 5812 / JCM 6584 / H10) (Clostridium cellulolyticum).